The following is a 407-amino-acid chain: Chorismate synthase (407 aa).

Residues Arg40 and Arg46 each coordinate NADP(+). FMN-binding positions include 138-140 and 259-260; these read RAS and QA. Over residues 275–284 the composition is skewed to basic and acidic residues; the sequence is RRGSRAHDEM. The segment at 275-308 is disordered; it reads RRGSRAHDEMYPGTDGVVRSTNRAGGLEGGMTNG. FMN-binding positions include Gly303, 318 to 322, and Arg344; that span reads KPIST.

Belongs to the chorismate synthase family. Homotetramer. FMNH2 serves as cofactor.

The enzyme catalyses 5-O-(1-carboxyvinyl)-3-phosphoshikimate = chorismate + phosphate. It participates in metabolic intermediate biosynthesis; chorismate biosynthesis; chorismate from D-erythrose 4-phosphate and phosphoenolpyruvate: step 7/7. Functionally, catalyzes the anti-1,4-elimination of the C-3 phosphate and the C-6 proR hydrogen from 5-enolpyruvylshikimate-3-phosphate (EPSP) to yield chorismate, which is the branch point compound that serves as the starting substrate for the three terminal pathways of aromatic amino acid biosynthesis. This reaction introduces a second double bond into the aromatic ring system. This is Chorismate synthase from Mycobacterium marinum (strain ATCC BAA-535 / M).